The chain runs to 150 residues: Probable FKBP-type 16 kDa peptidyl-prolyl cis-trans isomerase (150 aa).

The PPIase FKBP-type domain occupies Asn14–Pro88.

This sequence belongs to the FKBP-type PPIase family.

It catalyses the reaction [protein]-peptidylproline (omega=180) = [protein]-peptidylproline (omega=0). In terms of biological role, PPIases accelerate the folding of proteins. The chain is Probable FKBP-type 16 kDa peptidyl-prolyl cis-trans isomerase (yaaD) from Pseudomonas fluorescens.